A 419-amino-acid polypeptide reads, in one-letter code: Peroxisome biogenesis factor 10 (419 aa).

The Peroxisomal matrix segment spans residues 1 to 27 (MPPSEEIKLRAVSPRPDFKANYLEFAN). The helical transmembrane segment at 28–57 (APAIVRANQKDSYFETVLRDKLQNVIQIFK) threads the bilayer. Residue glycine 58 is a topological domain, cytoplasmic. A helical membrane pass occupies residues 59 to 80 (QRFTHTHPEEIGVAAKALYLSL). The Peroxisomal matrix portion of the chain corresponds to 81 to 108 (TTLLGTKTLGEEYVDLIYVSRDGKRIPR). Residues 109-141 (YLARAGFIFAYAILPYFLTRLFRRLKSSSTPKD) traverse the membrane as a helical segment. Residues 142 to 158 (EVTEEKINKELPISLRI) lie on the Cytoplasmic side of the membrane. A helical transmembrane segment spans residues 159-185 (EKYLSNMSYSKVLDTIMNLHIAVFYFS). The Peroxisomal matrix portion of the chain corresponds to 186-215 (GQFYNISKRFFSMRYAFGHKINKERTPNGN). Residues 216–235 (YELLGGLIVLQLVMKSLGGF) form a helical membrane-spanning segment. Residues 236 to 419 (KGLIGSFTGN…RTLGYFLVVF (184 aa)) are Cytoplasmic-facing. Residues cysteine 298, cysteine 301, cysteine 313, histidine 315, cysteine 318, cysteine 321, cysteine 334, and cysteine 347 each coordinate Zn(2+). An RING-type zinc finger spans residues 298-360 (CMLCLSYMTN…FYIPTLNKIC (63 aa)).

It belongs to the pex2/pex10/pex12 family. In terms of assembly, component of the peroxisomal translocation complex, composed of at least PEX3, PEX2, PEX10 and PEX12. Interacts with PEX19.

The protein resides in the peroxisome membrane. The enzyme catalyses S-ubiquitinyl-[E2 ubiquitin-conjugating enzyme]-L-cysteine + [acceptor protein]-L-lysine = [E2 ubiquitin-conjugating enzyme]-L-cysteine + N(6)-ubiquitinyl-[acceptor protein]-L-lysine.. It participates in protein modification; protein ubiquitination. Its activity is regulated as follows. The E3 ubiquitin-protein ligase activity is stimulated by PEX12. E3 ubiquitin-protein ligase component of the peroxisomal translocation complex. The two types of peroxisomal matrix targeting signals, PTS1 and PTS2, are first recognized in the cytosol by their receptors PEX5 and PEX7, respectively, which then carry the cargo to the peroxisomal membrane. The peroxisomal targeting signal (PTS) receptor-cargo complexes interact with peroxisomal membrane protein (PMP) components of the docking complex. They have then additional downstream interactions with the translocation complex, leading to the transport of fully folded and oligomerized cargo into the peroxisome matrix. The peroxisomal translocation complex forms the retrotranslocation channel with each subunit contributing transmembrane segments that coassemble into an open channel that specifically allows the passage of PEX5 and PEX20 through the peroxisomal membrane. Specifically catalyzes monoubiquitination of PEX5 and/or PEX20 at 'Cys-6' and 'Cys-8', respectively, a modification that acts as a signal for PEX5 or PEX20 export from peroxisomes to the cytosol, thereby promoting PEX5 and PEX20 recycling. This Komagataella pastoris (Yeast) protein is Peroxisome biogenesis factor 10.